The primary structure comprises 276 residues: Large ribosomal subunit protein uL2 (276 aa).

Residues 219–268 (TVRGSVMNPNDHPHGGGEGRQPVGRKSPMTPWGKPALGLKTRNKKAKSSK) are disordered.

The protein belongs to the universal ribosomal protein uL2 family. As to quaternary structure, part of the 50S ribosomal subunit. Forms a bridge to the 30S subunit in the 70S ribosome.

Functionally, one of the primary rRNA binding proteins. Required for association of the 30S and 50S subunits to form the 70S ribosome, for tRNA binding and peptide bond formation. It has been suggested to have peptidyltransferase activity; this is somewhat controversial. Makes several contacts with the 16S rRNA in the 70S ribosome. The polypeptide is Large ribosomal subunit protein uL2 (Lactococcus lactis subsp. cremoris (strain MG1363)).